We begin with the raw amino-acid sequence, 310 residues long: Thiamine-monophosphate kinase (310 aa).

The Mg(2+) site is built by Asp24, Thr38, and Asp39. Position 46 (Asp46) interacts with substrate. Asp67 and Asp115 together coordinate Mg(2+). ATP contacts are provided by residues 114–115 (GD) and Arg138. Asp203 serves as a coordination point for Mg(2+). Ser205 contacts ATP. Asp206 contributes to the Mg(2+) binding site. Substrate contacts are provided by Glu251 and Trp306.

This sequence belongs to the thiamine-monophosphate kinase family.

The enzyme catalyses thiamine phosphate + ATP = thiamine diphosphate + ADP. The protein operates within cofactor biosynthesis; thiamine diphosphate biosynthesis; thiamine diphosphate from thiamine phosphate: step 1/1. In terms of biological role, catalyzes the ATP-dependent phosphorylation of thiamine-monophosphate (TMP) to form thiamine-pyrophosphate (TPP), the active form of vitamin B1. In Nitrosopumilus maritimus (strain SCM1), this protein is Thiamine-monophosphate kinase.